The following is a 100-amino-acid chain: Large ribosomal subunit protein uL23 (100 aa).

Belongs to the universal ribosomal protein uL23 family. In terms of assembly, part of the 50S ribosomal subunit. Contacts protein L29, and trigger factor when it is bound to the ribosome.

Functionally, one of the early assembly proteins it binds 23S rRNA. One of the proteins that surrounds the polypeptide exit tunnel on the outside of the ribosome. Forms the main docking site for trigger factor binding to the ribosome. This Aeromonas hydrophila subsp. hydrophila (strain ATCC 7966 / DSM 30187 / BCRC 13018 / CCUG 14551 / JCM 1027 / KCTC 2358 / NCIMB 9240 / NCTC 8049) protein is Large ribosomal subunit protein uL23.